Consider the following 308-residue polypeptide: D-alanine--D-alanine ligase (308 aa).

The 198-residue stretch at 105–302 folds into the ATP-grasp domain; sequence KAIFRSLGLA…FPDLCDRILD (198 aa). 133–188 serves as a coordination point for ATP; that stretch reads DLPFGLPCVVKPAGEGSSVGVHLVNAAAELGPACRDAAGYAGDVIVERYVKGTEVD. The Mg(2+) site is built by Asp-256, Glu-269, and Asn-271.

Belongs to the D-alanine--D-alanine ligase family. Requires Mg(2+) as cofactor. It depends on Mn(2+) as a cofactor.

The protein resides in the cytoplasm. The catalysed reaction is 2 D-alanine + ATP = D-alanyl-D-alanine + ADP + phosphate + H(+). Its pathway is cell wall biogenesis; peptidoglycan biosynthesis. Its function is as follows. Cell wall formation. This chain is D-alanine--D-alanine ligase, found in Anaeromyxobacter dehalogenans (strain 2CP-C).